A 400-amino-acid polypeptide reads, in one-letter code: S-adenosylmethionine synthase (400 aa).

136–141 (GQGSVD) is a binding site for ATP.

It belongs to the AdoMet synthase 2 family. The cofactor is Mg(2+).

The catalysed reaction is L-methionine + ATP + H2O = S-adenosyl-L-methionine + phosphate + diphosphate. It functions in the pathway amino-acid biosynthesis; S-adenosyl-L-methionine biosynthesis; S-adenosyl-L-methionine from L-methionine: step 1/1. Its function is as follows. Catalyzes the formation of S-adenosylmethionine from methionine and ATP. This Thermoplasma volcanium (strain ATCC 51530 / DSM 4299 / JCM 9571 / NBRC 15438 / GSS1) protein is S-adenosylmethionine synthase.